We begin with the raw amino-acid sequence, 84 residues long: Small ribosomal subunit protein bS20 (84 aa).

This sequence belongs to the bacterial ribosomal protein bS20 family.

In terms of biological role, binds directly to 16S ribosomal RNA. This chain is Small ribosomal subunit protein bS20, found in Parabacteroides distasonis (strain ATCC 8503 / DSM 20701 / CIP 104284 / JCM 5825 / NCTC 11152).